The primary structure comprises 87 residues: Exodeoxyribonuclease 7 small subunit (87 aa).

It belongs to the XseB family. Heterooligomer composed of large and small subunits.

It is found in the cytoplasm. It carries out the reaction Exonucleolytic cleavage in either 5'- to 3'- or 3'- to 5'-direction to yield nucleoside 5'-phosphates.. Bidirectionally degrades single-stranded DNA into large acid-insoluble oligonucleotides, which are then degraded further into small acid-soluble oligonucleotides. In Xanthomonas campestris pv. campestris (strain 8004), this protein is Exodeoxyribonuclease 7 small subunit.